The primary structure comprises 352 residues: Histidinol-phosphate aminotransferase (352 aa).

At Lys221 the chain carries N6-(pyridoxal phosphate)lysine.

The protein belongs to the class-II pyridoxal-phosphate-dependent aminotransferase family. Histidinol-phosphate aminotransferase subfamily. As to quaternary structure, homodimer. The cofactor is pyridoxal 5'-phosphate.

It carries out the reaction L-histidinol phosphate + 2-oxoglutarate = 3-(imidazol-4-yl)-2-oxopropyl phosphate + L-glutamate. The protein operates within amino-acid biosynthesis; L-histidine biosynthesis; L-histidine from 5-phospho-alpha-D-ribose 1-diphosphate: step 7/9. The sequence is that of Histidinol-phosphate aminotransferase from Staphylococcus aureus (strain MSSA476).